The primary structure comprises 234 residues: S-adenosylmethionine synthase 1 (234 aa).

ATP contacts are provided by residues 10-12, 78-81, Asp89, 95-96, Ala112, Lys116, and Lys120; these read DGK, SGRF, and RK. Position 89 (Asp89) interacts with L-methionine. Lys120 contributes to the L-methionine binding site.

It belongs to the AdoMet synthase family. Homotetramer. Requires Mn(2+) as cofactor. Mg(2+) serves as cofactor. Co(2+) is required as a cofactor. It depends on K(+) as a cofactor. Mainly in floral buds and roots.

The protein resides in the cytoplasm. It carries out the reaction L-methionine + ATP + H2O = S-adenosyl-L-methionine + phosphate + diphosphate. Its pathway is amino-acid biosynthesis; S-adenosyl-L-methionine biosynthesis; S-adenosyl-L-methionine from L-methionine: step 1/1. In terms of biological role, catalyzes the formation of S-adenosylmethionine from methionine and ATP. The reaction comprises two steps that are both catalyzed by the same enzyme: formation of S-adenosylmethionine (AdoMet) and triphosphate, and subsequent hydrolysis of the triphosphate. The polypeptide is S-adenosylmethionine synthase 1 (SMS-1) (Petroselinum crispum (Parsley)).